Reading from the N-terminus, the 72-residue chain is Translation initiation factor IF-1 (72 aa).

The S1-like domain occupies 1–72; it reads MAKEDVIEIE…TRGRITYRFK (72 aa).

The protein belongs to the IF-1 family. Component of the 30S ribosomal translation pre-initiation complex which assembles on the 30S ribosome in the order IF-2 and IF-3, IF-1 and N-formylmethionyl-tRNA(fMet); mRNA recruitment can occur at any time during PIC assembly.

It is found in the cytoplasm. One of the essential components for the initiation of protein synthesis. Stabilizes the binding of IF-2 and IF-3 on the 30S subunit to which N-formylmethionyl-tRNA(fMet) subsequently binds. Helps modulate mRNA selection, yielding the 30S pre-initiation complex (PIC). Upon addition of the 50S ribosomal subunit IF-1, IF-2 and IF-3 are released leaving the mature 70S translation initiation complex. The sequence is that of Translation initiation factor IF-1 from Streptococcus suis (strain 05ZYH33).